Reading from the N-terminus, the 99-residue chain is SAGA-associated factor 11 (99 aa).

The segment at 71–92 adopts an SGF11-type zinc-finger fold; it reads IHCENCGRDVSANRLAAHLQRC.

The protein belongs to the SGF11 family. In terms of assembly, component of the 1.8 MDa SAGA transcription coactivator-HAT complex. SAGA is built of 5 distinct domains with specialized functions. Within the SAGA complex, SUS1, SGF11, SGF73 and UBP8 form an additional subcomplex of SAGA called the DUB module (deubiquitination module). Interacts directly with SGF73, SUS1 and UBP8.

It localises to the nucleus. Functionally, functions as a component of the transcription regulatory histone acetylation (HAT) complex SAGA. At the promoters, SAGA is required for recruitment of the basal transcription machinery. It influences RNA polymerase II transcriptional activity through different activities such as TBP interaction and promoter selectivity, interaction with transcription activators, and chromatin modification through histone acetylation and deubiquitination. SAGA acetylates nucleosomal histone H3 to some extent (to form H3K9ac, H3K14ac, H3K18ac and H3K23ac). SAGA interacts with DNA via upstream activating sequences (UASs). Involved in transcriptional regulation of a subset of SAGA-regulated genes. Within the SAGA complex, participates in a subcomplex, that specifically deubiquitinates histones H2B. The protein is SAGA-associated factor 11 of Saccharomyces cerevisiae (strain YJM789) (Baker's yeast).